We begin with the raw amino-acid sequence, 107 residues long: Ferredoxin 1 (107 aa).

4Fe-4S ferredoxin-type domains lie at 2-30 and 31-60; these read TFVV…YEGP and NFLV…SEDE. [3Fe-4S] cluster contacts are provided by cysteine 9 and cysteine 17. [4Fe-4S] cluster-binding residues include cysteine 21, cysteine 40, cysteine 43, and cysteine 46. Position 50 (cysteine 50) interacts with [3Fe-4S] cluster.

It depends on [4Fe-4S] cluster as a cofactor. Requires [3Fe-4S] cluster as cofactor.

Functionally, ferredoxins are iron-sulfur proteins that transfer electrons in a wide variety of metabolic reactions. The sequence is that of Ferredoxin 1 (fdxA) from Pseudomonas aeruginosa (strain ATCC 15692 / DSM 22644 / CIP 104116 / JCM 14847 / LMG 12228 / 1C / PRS 101 / PAO1).